The sequence spans 450 residues: Phosphoglucosamine mutase (450 aa).

Catalysis depends on serine 101, which acts as the Phosphoserine intermediate. Residues serine 101, aspartate 241, aspartate 243, and aspartate 245 each coordinate Mg(2+). A Phosphoserine modification is found at serine 101.

This sequence belongs to the phosphohexose mutase family. The cofactor is Mg(2+). Post-translationally, activated by phosphorylation.

It carries out the reaction alpha-D-glucosamine 1-phosphate = D-glucosamine 6-phosphate. Catalyzes the conversion of glucosamine-6-phosphate to glucosamine-1-phosphate. The polypeptide is Phosphoglucosamine mutase (Listeria monocytogenes serovar 1/2a (strain ATCC BAA-679 / EGD-e)).